We begin with the raw amino-acid sequence, 325 residues long: Holliday junction branch migration complex subunit RuvB (325 aa).

Residues 1 to 180 (MKNQLLDAKV…FGIHLKLNFY (180 aa)) are large ATPase domain (RuvB-L). Residues leucine 19, arginine 20, glycine 61, lysine 64, threonine 65, threonine 66, 127–129 (EDF), arginine 170, tyrosine 180, and arginine 217 each bind ATP. Threonine 65 lines the Mg(2+) pocket. The interval 181–251 (SCEELTKIVE…ITDYALNQLG (71 aa)) is small ATPAse domain (RuvB-S). The interval 254–325 (KLGLDSSDHK…ITANALKHLH (72 aa)) is head domain (RuvB-H). DNA contacts are provided by arginine 290, arginine 309, and arginine 314.

It belongs to the RuvB family. Homohexamer. Forms an RuvA(8)-RuvB(12)-Holliday junction (HJ) complex. HJ DNA is sandwiched between 2 RuvA tetramers; dsDNA enters through RuvA and exits via RuvB. An RuvB hexamer assembles on each DNA strand where it exits the tetramer. Each RuvB hexamer is contacted by two RuvA subunits (via domain III) on 2 adjacent RuvB subunits; this complex drives branch migration. In the full resolvosome a probable DNA-RuvA(4)-RuvB(12)-RuvC(2) complex forms which resolves the HJ.

It localises to the cytoplasm. It carries out the reaction ATP + H2O = ADP + phosphate + H(+). Functionally, the RuvA-RuvB-RuvC complex processes Holliday junction (HJ) DNA during genetic recombination and DNA repair, while the RuvA-RuvB complex plays an important role in the rescue of blocked DNA replication forks via replication fork reversal (RFR). RuvA specifically binds to HJ cruciform DNA, conferring on it an open structure. The RuvB hexamer acts as an ATP-dependent pump, pulling dsDNA into and through the RuvAB complex. RuvB forms 2 homohexamers on either side of HJ DNA bound by 1 or 2 RuvA tetramers; 4 subunits per hexamer contact DNA at a time. Coordinated motions by a converter formed by DNA-disengaged RuvB subunits stimulates ATP hydrolysis and nucleotide exchange. Immobilization of the converter enables RuvB to convert the ATP-contained energy into a lever motion, pulling 2 nucleotides of DNA out of the RuvA tetramer per ATP hydrolyzed, thus driving DNA branch migration. The RuvB motors rotate together with the DNA substrate, which together with the progressing nucleotide cycle form the mechanistic basis for DNA recombination by continuous HJ branch migration. Branch migration allows RuvC to scan DNA until it finds its consensus sequence, where it cleaves and resolves cruciform DNA. The sequence is that of Holliday junction branch migration complex subunit RuvB from Orientia tsutsugamushi (strain Ikeda) (Rickettsia tsutsugamushi).